The chain runs to 72 residues: Large ribosomal subunit protein bL31 (72 aa).

Cys-16, Cys-18, Cys-38, and Cys-41 together coordinate Zn(2+).

Belongs to the bacterial ribosomal protein bL31 family. Type A subfamily. In terms of assembly, part of the 50S ribosomal subunit. Zn(2+) is required as a cofactor.

Functionally, binds the 23S rRNA. The protein is Large ribosomal subunit protein bL31 of Francisella tularensis subsp. holarctica (strain LVS).